Consider the following 247-residue polypeptide: tRNA pseudouridine synthase A (247 aa).

Asp57 serves as the catalytic Nucleophile. Residue Tyr115 participates in substrate binding.

Belongs to the tRNA pseudouridine synthase TruA family. As to quaternary structure, homodimer.

It carries out the reaction uridine(38/39/40) in tRNA = pseudouridine(38/39/40) in tRNA. Its function is as follows. Formation of pseudouridine at positions 38, 39 and 40 in the anticodon stem and loop of transfer RNAs. In Chlorobaculum tepidum (strain ATCC 49652 / DSM 12025 / NBRC 103806 / TLS) (Chlorobium tepidum), this protein is tRNA pseudouridine synthase A.